Consider the following 337-residue polypeptide: uncharacterized protein (337 aa).

Residues 1–10 lie on the Cytoplasmic side of the membrane; the sequence is MKLKINIRPN. Residues 11–31 form a helical membrane-spanning segment; sequence EIIFLICIVVIFSFSYTLTYF. The Extracellular segment spans residues 32-100; it reads DSPIFKEHYI…LEKLFSFSDN (69 aa). The helical transmembrane segment at 101 to 121 threads the bilayer; sequence ILIVLIIVQVIVGFLIFLLSV. At 122–197 the chain is on the cytoplasmic side; it reads EKLSKCNYQL…KILIIKKKRD (76 aa). The segment covering 148–167 has biased composition (low complexity); sequence NNNNEDINNNNNNNNNNNNK. The interval 148–179 is disordered; sequence NNNNEDINNNNNNNNNNNNKNKNDERNNEEIE. The chain crosses the membrane as a helical span at residues 198 to 218; it reads ILLAIIIFFLVLLGVLTIIYV. Over 219–285 the chain is Extracellular; that stretch reads SFIPLNIRKA…SWSLDSGLFN (67 aa). A helical transmembrane segment spans residues 286-306; sequence VKIVFFSTILIEFLTGCLILL. At 307-337 the chain is on the cytoplasmic side; sequence MKFKKDPNIVPLTKPSIASPTQIPHLFCIAK.

The protein localises to the membrane. This is an uncharacterized protein from Dictyostelium discoideum (Social amoeba).